Reading from the N-terminus, the 141-residue chain is Large ribosomal subunit protein uL11 (141 aa).

This sequence belongs to the universal ribosomal protein uL11 family. In terms of assembly, part of the ribosomal stalk of the 50S ribosomal subunit. Interacts with L10 and the large rRNA to form the base of the stalk. L10 forms an elongated spine to which L12 dimers bind in a sequential fashion forming a multimeric L10(L12)X complex. Post-translationally, one or more lysine residues are methylated.

Its function is as follows. Forms part of the ribosomal stalk which helps the ribosome interact with GTP-bound translation factors. The polypeptide is Large ribosomal subunit protein uL11 (Synechococcus sp. (strain ATCC 27144 / PCC 6301 / SAUG 1402/1) (Anacystis nidulans)).